The primary structure comprises 340 residues: Phosphate acyltransferase (340 aa).

Belongs to the PlsX family. In terms of assembly, homodimer. Probably interacts with PlsY.

The protein resides in the cytoplasm. The enzyme catalyses a fatty acyl-[ACP] + phosphate = an acyl phosphate + holo-[ACP]. Its pathway is lipid metabolism; phospholipid metabolism. In terms of biological role, catalyzes the reversible formation of acyl-phosphate (acyl-PO(4)) from acyl-[acyl-carrier-protein] (acyl-ACP). This enzyme utilizes acyl-ACP as fatty acyl donor, but not acyl-CoA. This is Phosphate acyltransferase from Nitrosococcus oceani (strain ATCC 19707 / BCRC 17464 / JCM 30415 / NCIMB 11848 / C-107).